The sequence spans 1001 residues: MSYDYHQSWSRDGGPRGSGQGSSGGGGGGSRGSGGGGGGRGGRGRHPAHLKGREIGLWYAKKQTQKNKEAERQERAVVHMDERREEQIVQLLNSVQAKTDKDSEAQISWFAPEDHGYGTEVSSEKKINSEKKLDNQEKKLLNQEKKTFRITDKSYIDRDSEYLLQENEPNLSLDQHLLEDLQRKKTDPRYIEMQRFRKKLPSYGMQKELVNLINNHQVTVISGETGCGKTTQVTQFILDNYIERGKGSACRIVCTQPRRISAISVAERVATERAESCGNGNSTGYQIRLQSRLPRKQGSILYCTTGIILQWLQSDSRLSSVSHIVLDEIHERNLQSDVLMTVIKDLLHFRSDLKVILMSATLNAEKFSEYFGNCPMIHIPGFTFPVVEYLLEDIIEKIRYVPDQKEHRSQFKRGFMQGHVNRQEKEEKEAIYKERWPAYIKELRTRYSASTVDVLQMMDDDKVDLNLIAALIRYIVLEEEDGAILVFLPGWDNISTLHDLLMSQVMFKSDKFLIIPLHSLMPTVNQTQVFKKTPPGVRKIVIATNIAETSITIDDVVYVIDGGKIKETHFDTQNNISTMSAEWVSKANAKQRKGRAGRVQPGHCYHLYNGLRASLLDDYQLPEILRTPLEELCLQIKILRLGGIAYFLSRLMDPPSNEAVVLSIKHLMELSALDKQEELTPLGVHLARLPVEPHIGKMILFGALFCCLDPVLTIAASLSFKDPFVIPLGKEKIADARRKELAKETRSDHLTVVNAFEGWEEAKRRGFRYEKDYCWEYFLSSNTLQMLHNMKGQFAEHLLGAGFVSSRSPKDPKANINSDNEKIIKAVICAGLYPKVAKIRLNLGKKRKMVKVHTKSDGLVSIHPKSVNVEQTDFHYNWLIYHLKMRTSSIYLYDCTEVSPYCLLFFGGDISIQKDKDQEIIAVDEWIVFQSPERIAHLVKGLRKELDSLLQEKIESPHPVDWDDTKSRDCAVLSAILDLIKTQEKATPRNLPPRSQDGYYS.

Positions 1–44 (MSYDYHQSWSRDGGPRGSGQGSSGGGGGGSRGSGGGGGGRGGRG) are required for recruitment to cytoplasmic stress granules. A disordered region spans residues 1 to 54 (MSYDYHQSWSRDGGPRGSGQGSSGGGGGGSRGSGGGGGGRGGRGRHPAHLKGRE). The interval 1–97 (MSYDYHQSWS…IVQLLNSVQA (97 aa)) is required for the pre-miR-134 transport. The interval 1–193 (MSYDYHQSWS…KKTDPRYIEM (193 aa)) is necessary for nuclear and nucleolar caps localizations. The segment covering 15-41 (PRGSGQGSSGGGGGGSRGSGGGGGGRG) has biased composition (gly residues). The DSM (DHX36-specific motif) stretch occupies residues 46-68 (HPAHLKGREIGLWYAKKQTQKNK). The interval 46–98 (HPAHLKGREIGLWYAKKQTQKNKEAERQERAVVHMDERREEQIVQLLNSVQAK) is required for G4-DNA- and G4-RNA-binding. 2 recA-like domain regions span residues 99–379 (TDKD…MIHI) and 380–621 (PGFT…DYQL). The stretch at 120-147 (EVSSEKKINSEKKLDNQEKKLLNQEKKT) forms a coiled coil. A Phosphoserine modification is found at Ser-154. Residues 210-380 (VNLINNHQVT…FGNCPMIHIP (171 aa)) form the Helicase ATP-binding domain. Residue 226-231 (GCGKTT) participates in ATP binding. The interval 258 to 310 (RRISAISVAERVATERAESCGNGNSTGYQIRLQSRLPRKQGSILYCTTGIILQ) is necessary for interaction with single-stranded DNA at the 3'-end of the G4-DNA structure. The DEAH box motif lies at 327-330 (DEIH). The Mg(2+) site is built by Glu-328 and His-330. The region spanning 470 to 640 (ALIRYIVLEE…ELCLQIKILR (171 aa)) is the Helicase C-terminal domain. Residues 491–550 (WDNISTLHDLLMSQVMFKSDKFLIIPLHSLMPTVNQTQVFKKTPPGVRKIVIATNIAETS) are necessary for interaction with single-stranded DNA at the 3'-end of the G4-DNA structure. The Nuclear localization signal motif lies at 510–521 (DKFLIIPLHSLM). ATP-binding positions include Ser-550 and 595 to 598 (RAGR). Positions 622-691 (PEILRTPLEE…LGVHLARLPV (70 aa)) are WH domain. Necessary for interaction with single-stranded DNA at the 3'-end of the G4-DNA structure regions lie at residues 631-690 (ELCL…ARLP), 842-853 (NLGKKRKMVKVH), and 863-893 (HPKS…IYLY). The tract at residues 834–898 (PKVAKIRLNL…SIYLYDCTEV (65 aa)) is OB-fold-like subdomains. Lys-940 carries the N6-acetyllysine modification. Ser-956 is subject to Phosphoserine.

The protein belongs to the DEAD box helicase family. DEAH subfamily. Found in a multi-helicase-TICAM1 complex at least composed of DHX36, DDX1, DDX21 and TICAM1; this complex exists in resting cells with or without dsRNA poly(I:C) ligand stimulation. Interacts (via C-terminus) with TICAM1 (via TIR domain). Interacts (via C-terminus) with DDX21; this interaction serves as bridges to TICAM1. Interacts with TERT; this interaction is dependent on the ability of DHX36 to bind to the G-quadruplex RNA (G4-RNA) structure present in the telomerase RNA template component (TERC). Interacts with DKC1; this interaction is dependent on the ability of DHX36 to bind to the G4-RNA structure present in TERC. Interacts with PARN; this interaction stimulates PARN to enhance uPA mRNA decay. Interacts with EXOSC3; this interaction occurs in a RNase-insensitive manner. Interacts with EXOSC10; this interaction occurs in a RNase-insensitive manner. Interacts with ILF3; this interaction occurs in a RNA-dependent manner. Interacts with ELAVL1; this interaction occurs in an RNA-dependent manner. Interacts with DDX5; this interaction occurs in a RNA-dependent manner. Interacts with DDX17; this interaction occurs in a RNA-dependent manner. Interacts with HDAC1; this interaction occurs in a RNA-dependent manner. Interacts with HDAC3; this interaction occurs in a RNA-dependent manner. Interacts with HDAC4. Interacts with AGO1. Interacts with AGO2. Interacts with ERCC6. It depends on Mg(2+) as a cofactor. As to expression, expressed in spermatogonia stem cells and primary spermatocytes (at protein level). Expressed strongly in testis. Weakly expressed in heart, lung, liver, kidney, small intestine, spleen, lymphe node and thymus.

It is found in the nucleus. The protein localises to the cytoplasm. The protein resides in the cytosol. Its subcellular location is the stress granule. It localises to the nucleus speckle. It is found in the chromosome. The protein localises to the telomere. The protein resides in the mitochondrion. Its subcellular location is the perikaryon. It localises to the cell projection. It is found in the dendrite. The protein localises to the axon. The catalysed reaction is ATP + H2O = ADP + phosphate + H(+). With respect to regulation, ATPase activity is enhanced in the presence of homomeric poly(U) RNAs, but not by double-stranded DNA (dsDNA), double-stranded RNA (dsRNA) and tRNA. Its function is as follows. Multifunctional ATP-dependent helicase that unwinds G-quadruplex (G4) structures. Plays a role in many biological processes such as genomic integrity, gene expression regulations and as a sensor to initiate antiviral responses. G4 structures correspond to helical structures containing guanine tetrads. Binds with high affinity to and unwinds G4 structures that are formed in nucleic acids (G4-DNA and G4-RNA). Plays a role in genomic integrity. Converts the G4-RNA structure present in telomerase RNA template component (TREC) into a double-stranded RNA to promote P1 helix formation that acts as a template boundary ensuring accurate reverse transcription. Plays a role in transcriptional regulation. Resolves G4-DNA structures in promoters of genes, such as YY1, KIT/c-kit and ALPL and positively regulates their expression. Plays a role in post-transcriptional regulation. Unwinds a G4-RNA structure located in the 3'-UTR polyadenylation site of the pre-mRNA TP53 and stimulates TP53 pre-mRNA 3'-end processing in response to ultraviolet (UV)-induced DNA damage. Binds to the precursor-microRNA-134 (pre-miR-134) terminal loop and regulates its transport into the synapto-dendritic compartment. Involved in the pre-miR-134-dependent inhibition of target gene expression and the control of dendritic spine size. Plays a role in the regulation of cytoplasmic mRNA translation and mRNA stability. Binds to both G4-RNA structures and alternative non-quadruplex-forming sequence within the 3'-UTR of the PITX1 mRNA regulating negatively PITX1 protein expression. Binds to both G4-RNA structure in the 5'-UTR and AU-rich elements (AREs) localized in the 3'-UTR of NKX2-5 mRNA to either stimulate protein translation or induce mRNA decay in an ELAVL1-dependent manner, respectively. Also binds to ARE sequences present in several mRNAs mediating exosome-mediated 3'-5' mRNA degradation. Involved in cytoplasmic urokinase-type plasminogen activator (uPA) mRNA decay. Component of a multi-helicase-TICAM1 complex that acts as a cytoplasmic sensor of viral double-stranded RNA (dsRNA) and plays a role in the activation of a cascade of antiviral responses including the induction of pro-inflammatory cytokines via the adapter molecule TICAM1. Required for the early embryonic development and hematopoiesis. Involved in the regulation of cardioblast differentiation and proliferation during heart development. Involved in spermatogonia differentiation. May play a role in ossification. In Mus musculus (Mouse), this protein is ATP-dependent DNA/RNA helicase DHX36.